Reading from the N-terminus, the 254-residue chain is Dihydroorotate dehydrogenase B (NAD(+)), electron transfer subunit (254 aa).

An FAD-binding FR-type domain is found at 1–99 (MLQTEMKVIQ…LGPLGKGFDI (99 aa)). Residues 50 to 53 (RPIS), 67 to 69 (LYR), and 74 to 75 (GT) contribute to the FAD site. 4 residues coordinate [2Fe-2S] cluster: Cys-218, Cys-223, Cys-226, and Cys-241.

The protein belongs to the PyrK family. As to quaternary structure, heterotetramer of 2 PyrK and 2 PyrD type B subunits. It depends on [2Fe-2S] cluster as a cofactor. FAD is required as a cofactor.

It functions in the pathway pyrimidine metabolism; UMP biosynthesis via de novo pathway; orotate from (S)-dihydroorotate (NAD(+) route): step 1/1. Responsible for channeling the electrons from the oxidation of dihydroorotate from the FMN redox center in the PyrD type B subunit to the ultimate electron acceptor NAD(+). In Listeria monocytogenes serovar 1/2a (strain ATCC BAA-679 / EGD-e), this protein is Dihydroorotate dehydrogenase B (NAD(+)), electron transfer subunit.